A 986-amino-acid chain; its full sequence is Leucine-rich repeat receptor-like kinase protein HAR1 (986 aa).

A signal peptide spans 1–25 (MRIRVSYLLVLCFTLIWFRWTVVYS). 21 LRR repeats span residues 71–97 (DQNL…IGLL), 98–121 (EKLE…LASL), 123–145 (SLKV…ITVG), 146–170 (MTEL…IVKL), 171–196 (EKLK…EFQS), 198–218 (EFLG…LAKL), 243–267 (MENL…LGNL), 268–291 (TKLH…LSSM), 293–314 (SLMS…SFSK), 316–339 (KNLT…IGDL), 340–363 (PNLE…LGGN), 365–387 (RFLY…LCKS), 388–411 (GRLK…IGEC), 412–435 (RSLT…VFQL), 437–458 (SVTI…VISG), 459–482 (ESLG…MKNL), 483–506 (RALQ…VFEI), 508–530 (MLTK…ITHR), 531–554 (ASLT…MKNL), 555–578 (MDLS…IRFM), and 579–603 (TSLT…QFLV). Asn80, Asn102, Asn109, Asn128, and Asn141 each carry an N-linked (GlcNAc...) asparagine glycan. 3 N-linked (GlcNAc...) asparagine glycosylation sites follow: Asn255, Asn266, and Asn279. Residues Asn317 and Asn351 are each glycosylated (N-linked (GlcNAc...) asparagine). Residues Asn513 and Asn518 are each glycosylated (N-linked (GlcNAc...) asparagine). Residues Asn561 and Asn590 are each glycosylated (N-linked (GlcNAc...) asparagine). The helical transmembrane segment at 645–665 (IVIGIALATAVLLVAVTVHVV) threads the bilayer. Positions 695 to 971 (LKEENIIGKG…TMREVVHMLT (277 aa)) constitute a Protein kinase domain. ATP contacts are provided by residues 701–709 (IGKGGAGIV) and Lys723. The active-site Proton acceptor is Asp820.

Belongs to the protein kinase superfamily. Ser/Thr protein kinase family. As to expression, expressed in roots, leaves, stems and flowers.

The protein resides in the cell membrane. It catalyses the reaction L-seryl-[protein] + ATP = O-phospho-L-seryl-[protein] + ADP + H(+). The enzyme catalyses L-threonyl-[protein] + ATP = O-phospho-L-threonyl-[protein] + ADP + H(+). Its function is as follows. LRR receptor kinase involved in the regulation of root and shoot growth, and root nodule organogenesis. Involved in long distance nodulation signaling events. Involved in the autoregulation of nodulation (AON), a long distance systemic signaling from root to shoot and back again, which allows legumes to limit the number of root nodules formed based on available nitrogen and previous rhizobial colonization. Acts from shoot to root to control AON. Involved in the regulation of root colonization by arbuscular mycorrhizal (AM) fungi. This is Leucine-rich repeat receptor-like kinase protein HAR1 from Lotus japonicus (Lotus corniculatus var. japonicus).